We begin with the raw amino-acid sequence, 171 residues long: Protein-export protein SecB (171 aa).

The protein belongs to the SecB family. As to quaternary structure, homotetramer, a dimer of dimers. One homotetramer interacts with 1 SecA dimer.

It localises to the cytoplasm. In terms of biological role, one of the proteins required for the normal export of preproteins out of the cell cytoplasm. It is a molecular chaperone that binds to a subset of precursor proteins, maintaining them in a translocation-competent state. It also specifically binds to its receptor SecA. This is Protein-export protein SecB from Histophilus somni (strain 129Pt) (Haemophilus somnus).